Reading from the N-terminus, the 354-residue chain is Uroporphyrinogen decarboxylase (354 aa).

Substrate contacts are provided by residues arginine 30–arginine 34, phenylalanine 49, aspartate 79, tyrosine 156, serine 211, and histidine 326.

Belongs to the uroporphyrinogen decarboxylase family. In terms of assembly, homodimer.

The protein resides in the cytoplasm. The enzyme catalyses uroporphyrinogen III + 4 H(+) = coproporphyrinogen III + 4 CO2. It participates in porphyrin-containing compound metabolism; protoporphyrin-IX biosynthesis; coproporphyrinogen-III from 5-aminolevulinate: step 4/4. Catalyzes the decarboxylation of four acetate groups of uroporphyrinogen-III to yield coproporphyrinogen-III. This Salinibacter ruber (strain DSM 13855 / M31) protein is Uroporphyrinogen decarboxylase.